The primary structure comprises 474 residues: Glutamyl-tRNA(Gln) amidotransferase subunit A (474 aa).

Residues K76 and S151 each act as charge relay system in the active site. S175 (acyl-ester intermediate) is an active-site residue.

It belongs to the amidase family. GatA subfamily. In terms of assembly, heterotrimer of A, B and C subunits.

The enzyme catalyses L-glutamyl-tRNA(Gln) + L-glutamine + ATP + H2O = L-glutaminyl-tRNA(Gln) + L-glutamate + ADP + phosphate + H(+). Its function is as follows. Allows the formation of correctly charged Gln-tRNA(Gln) through the transamidation of misacylated Glu-tRNA(Gln) in organisms which lack glutaminyl-tRNA synthetase. The reaction takes place in the presence of glutamine and ATP through an activated gamma-phospho-Glu-tRNA(Gln). This Chlorobium limicola (strain DSM 245 / NBRC 103803 / 6330) protein is Glutamyl-tRNA(Gln) amidotransferase subunit A.